The primary structure comprises 262 residues: Tryptophan synthase alpha chain (262 aa).

Residues Glu49 and Asp60 each act as proton acceptor in the active site.

The protein belongs to the TrpA family. As to quaternary structure, tetramer of two alpha and two beta chains.

The catalysed reaction is (1S,2R)-1-C-(indol-3-yl)glycerol 3-phosphate + L-serine = D-glyceraldehyde 3-phosphate + L-tryptophan + H2O. It participates in amino-acid biosynthesis; L-tryptophan biosynthesis; L-tryptophan from chorismate: step 5/5. In terms of biological role, the alpha subunit is responsible for the aldol cleavage of indoleglycerol phosphate to indole and glyceraldehyde 3-phosphate. The chain is Tryptophan synthase alpha chain from Caldanaerobacter subterraneus subsp. tengcongensis (strain DSM 15242 / JCM 11007 / NBRC 100824 / MB4) (Thermoanaerobacter tengcongensis).